Here is a 301-residue protein sequence, read N- to C-terminus: Nitric oxide synthase-interacting protein (301 aa).

Serine 36 is modified (phosphoserine). The tract at residues 55-75 is U-box-like; sequence DPVVTPDGYLYEREAILEYIL. The Nuclear localization signal signature appears at 78–101; it reads KREIARQVKAYEKQRGARREEQKE. The interval 131-154 is disordered; it reads PKAATLPNTEGEQPGPSVGPVGKD.

It belongs to the NOSIP family. In terms of assembly, interacts with NOS1 and NOS3. Interacts with PP2A holoenzyme, containing PPP2CA, PPP2CB, PPP2R1A and PPP2R2A subunits.

It is found in the cytoplasm. The protein resides in the nucleus. The enzyme catalyses S-ubiquitinyl-[E2 ubiquitin-conjugating enzyme]-L-cysteine + [acceptor protein]-L-lysine = [E2 ubiquitin-conjugating enzyme]-L-cysteine + N(6)-ubiquitinyl-[acceptor protein]-L-lysine.. The protein operates within protein modification; protein ubiquitination. E3 ubiquitin-protein ligase that is essential for proper development of the forebrain, the eye and the face. Catalyzes monoubiquitination of serine/threonine-protein phosphatase 2A (PP2A) catalytic subunit PPP2CA/PPP2CB. Negatively regulates nitric oxide production by inducing NOS1 and NOS3 translocation to actin cytoskeleton and inhibiting their enzymatic activity. The polypeptide is Nitric oxide synthase-interacting protein (Nosip) (Mus musculus (Mouse)).